A 545-amino-acid polypeptide reads, in one-letter code: Glucose-6-phosphate isomerase (545 aa).

E351 acts as the Proton donor in catalysis. Catalysis depends on residues H382 and K510.

It belongs to the GPI family.

It is found in the cytoplasm. It carries out the reaction alpha-D-glucose 6-phosphate = beta-D-fructose 6-phosphate. The protein operates within carbohydrate biosynthesis; gluconeogenesis. It functions in the pathway carbohydrate degradation; glycolysis; D-glyceraldehyde 3-phosphate and glycerone phosphate from D-glucose: step 2/4. Catalyzes the reversible isomerization of glucose-6-phosphate to fructose-6-phosphate. This is Glucose-6-phosphate isomerase from Shewanella sediminis (strain HAW-EB3).